The primary structure comprises 256 residues: Protein FixA (256 aa).

It belongs to the ETF beta-subunit/FixA family. In terms of assembly, heterodimer of FixA and FixB.

It functions in the pathway amine and polyamine metabolism; carnitine metabolism. Functionally, required for anaerobic carnitine reduction. May bring reductant to CaiA. This Shigella flexneri serotype 5b (strain 8401) protein is Protein FixA.